The primary structure comprises 305 residues: uncharacterized protein (305 aa).

Residues Ala-267 to Ala-287 are disordered.

The protein belongs to the DnaB/DnaD family.

This is an uncharacterized protein from Listeria innocua serovar 6a (strain ATCC BAA-680 / CLIP 11262).